The chain runs to 335 residues: Pro-cathepsin H (335 aa).

Residues 1–22 (MWAVLSLLCAGAWLLGPPACGA) form the signal peptide. The propeptide occupies 23 to 97 (SNLAVSSFEK…DEIRHKYLWS (75 aa)). Asparagine 72 and asparagine 101 each carry an N-linked (GlcNAc...) asparagine glycan. 4 disulfide bridges follow: cysteine 102–cysteine 327, cysteine 138–cysteine 181, cysteine 172–cysteine 214, and cysteine 272–cysteine 322. A propeptide spanning residues 107-115 (GNYLRGTGP) is cleaved from the precursor. Cysteine 141 is a catalytic residue. Asparagine 230 carries an N-linked (GlcNAc...) asparagine glycan. Catalysis depends on residues histidine 281 and asparagine 301.

It belongs to the peptidase C1 family. As to quaternary structure, composed of cathepsin H and mini chain; disulfide-linked. Cathepsin H may be split into heavy and light chain. All chains are held together by disulfide bonds.

The protein resides in the lysosome. It carries out the reaction Hydrolysis of proteins, acting as an aminopeptidase (notably, cleaving Arg-|-Xaa bonds) as well as an endopeptidase.. Its function is as follows. Important for the overall degradation of proteins in lysosomes. The chain is Pro-cathepsin H (CTSH) from Sus scrofa (Pig).